The primary structure comprises 119 residues: uncharacterized protein (119 aa).

Positions 1–22 (MQGQAGKRKTDGKVPSNTEQNC) are disordered.

This is an uncharacterized protein from Saccharomyces cerevisiae (strain ATCC 204508 / S288c) (Baker's yeast).